The chain runs to 1687 residues: Genome polyprotein (1687 aa).

Residues 1–13 (MRMATPSSAPSVR) show a composition bias toward polar residues. The tract at residues 1-56 (MRMATPSSAPSVRNTEKRKNKKASSKASVSFGAPSPLSSESEDEINYMTPPEQEAQ) is disordered. The segment at 1-116 (MRMATPSSAP…FRRYPHLRPK (116 aa)) is interaction with host MAP1LC3A/LC3. The interval 117–341 (EDRPDAPSHA…ISIFGEWQAE (225 aa)) is interaction with NTPase. Residues 244–341 (SPVQDWNVDP…ISIFGEWQAE (98 aa)) are interaction with NS4. 2 host ER membrane association regions span residues 261–292 (KLRM…KPLN) and 302–341 (WTFS…WQAE). The interaction with NS1-2, NS4 and homooligomerization stretch occupies residues 342 to 518 (GPFDLALDVV…GKTCFCQNLA (177 aa)). Residues 476 to 641 (RISMARAAFE…DDARARAPGD (166 aa)) enclose the SF3 helicase domain. 504-511 (GRPGIGKT) is an ATP binding site. Residues 595–700 (VIIITTNQQT…AVALVHERHD (106 aa)) form an important for mitochondrion targeting region. Residues 893-898 (DEEYDE) form an acidic region. O-(5'-phospho-RNA)-tyrosine is present on Tyr-896. The interaction with host EIF4G stretch occupies residues 978 to 994 (WADDDRQVDYGEKINFE). One can recognise a Peptidase C37 domain in the interval 995 to 1172 (APVSIWSRVV…AATHGEPTLE (178 aa)). Catalysis depends on for 3CLpro activity residues His-1024, Asp-1048, and Cys-1133. A RdRp catalytic domain is found at 1416 to 1537 (RYHMDADYTR…STNLELDMVK (122 aa)). Positions 1420 and 1422 each coordinate Mg(2+). Cysteines 1482 and 1484 form a disulfide. 3 residues coordinate Mg(2+): Asp-1524, Glu-1525, and Ser-1569.

As to quaternary structure, homodimer. Interacts with NTPase; this interaction increases the proapoptotic activity of the NTPase and is crucial for the formation of the viral replication complex. Interacts with NS4; this interaction is crucial for the formation of the viral replication complex. Interacts (via N-terminus) with host VAPA. Interacts with host VAPB. Monomer. In terms of assembly, homooligomer. Interacts with NS1-2; this interaction increases the proapoptotic activity of the NTPase and is crucial for the formation of the viral replication complex. Interacts with NS4; this interaction increases the proapoptotic activity of the NTPase. Interacts with host G3BP1; this interaction leads to the redistribution of G3BP1 and its cellular partners to the viral replication complexes, thereby preventing the assembly of stress granules. As to quaternary structure, homodimer. Monomer; in solution. Interacts with NTPase; this interaction increases the proapoptotic activity of the NTPase. Interacts with NS1-2; this interaction is crucial for the formation of the viral replication complex. In terms of assembly, monomer. Interacts with the RNA-directed RNA polymerase; this interaction induces the multimerization of the RdRp and enhances its activity. Interacts with host IEF4E; this interaction plays a role in translation of viral proteins. Interacts (via C-terminus) with host IEF4G1 (via central domain); this interaction plays a role in translation of viral proteins. As to quaternary structure, homohexamer; also forms fibrous hexameric oligomer. Interacts with the viral genome-linked protein; this interaction induces the multimerization of the RdRp and enhances its activity. It depends on Mg(2+) as a cofactor. Requires Mn(2+) as cofactor. Post-translationally, specific enzymatic cleavages in vivo yield mature proteins. 3CLpro is first autocatalytically cleaved, then processes the whole polyprotein. Cleaved by host CASP3/caspase 3 at 18-22 h.p.i. The cleavage allows NS1 secretion, which is essential for intestinal infection and resistance to IFN-lambda. In terms of processing, VPg is uridylylated by the polymerase and is covalently attached to the 5'-end of the polyadenylated genomic and subgenomic RNAs. This uridylylated form acts as a nucleotide-peptide primer for the polymerase.

It is found in the host endoplasmic reticulum membrane. The protein resides in the secreted. Its subcellular location is the host endosome membrane. It localises to the host mitochondrion. The protein localises to the host cytoplasm. It is found in the host perinuclear region. The enzyme catalyses a ribonucleoside 5'-triphosphate + H2O = a ribonucleoside 5'-diphosphate + phosphate + H(+). It catalyses the reaction Endopeptidase with a preference for cleavage when the P1 position is occupied by Glu-|-Xaa and the P1' position is occupied by Gly-|-Yaa.. The catalysed reaction is RNA(n) + a ribonucleoside 5'-triphosphate = RNA(n+1) + diphosphate. Its activity is regulated as follows. Inhibited by Suramin, Suramin-related compounds and NF023. Inhibited by PPNDS. Induces the proliferation of the host smooth ER membranes forming long tubular structures. These remodeled membranes probably form the viral factories that contain the replication complex. May play a role in viral replication by interacting with host VAPA, a vesicle-associated membrane protein that plays a role in SNARE-mediated vesicle fusion. This interaction may target replication complex to intracellular membranes. Its function is as follows. Promotes intestinal tropism and persistent fecal shedding in strain CR6. This function requires Glu-94 and is present in persistant strains. In terms of biological role, displays NTPase activity, but probably no helicase activity. Displays RNA chaperone-like activity and destabilizes dsRNA. Induces the formation of convoluted membranes derived from the host ER. These remodeled membranes probably form the viral factories that contain the replication complex. Initiates host cell death by targeting the mitochondrial outer membrane, leading to the permeabilization of mitochondria, programmed host cell death and viral egress. Externalization of host cardiolipin seems to be involved in the process. Probably plays a role in preventing the assembly of host stress granules. Functionally, probable key protein responsible for the formation of membrane alterations by the virus. Induces the formation of convoluted membranes derived from the host ER. These remodeled membranes probably form the viral factories that contain the replication complex. May play a role in targeting replication complex to intracellular membranes. Viral genome-linked protein is covalently linked to the 5'-end of the positive-strand, negative-strand genomic RNAs and subgenomic RNA. Acts as a genome-linked replication primer. May recruit ribosome to viral RNA thereby promoting viral proteins translation. Interacts with host translation initiation complex to allow the translation of viral proteins. Induces the formation of aggregates of RNA-directed RNA polymerase in the presence of RNA. Through its interaction with the viral RNA-directed RNA polymerase, plays a crucial role in enhancing the polymerase activity. Its function is as follows. Processes the polyprotein. 3CLpro-RdRp is first released by autocleavage, then all other proteins are cleaved. May cleave host polyadenylate-binding protein thereby inhibiting cellular translation. Does not cleave host G3BP1. In terms of biological role, replicates genomic and antigenomic RNA by recognizing replications specific signals. Also transcribes a subgenomic mRNA by initiating RNA synthesis internally on antigenomic RNA. This sgRNA codes for structural proteins. Catalyzes the covalent attachment VPg with viral RNAs. This chain is Genome polyprotein, found in Norovirus (isolate Mouse/NoV/United States/MNV1/2002/GV) (MNV-1).